The chain runs to 394 residues: Bifunctional enzyme IspD/IspF (394 aa).

Residues 1–230 form a 2-C-methyl-D-erythritol 4-phosphate cytidylyltransferase region; sequence MADTLAIVVA…AEALLGGGPV (230 aa). The segment at 231–394 is 2-C-methyl-D-erythritol 2,4-cyclodiphosphate synthase; the sequence is LVGFGYDVHR…RIVLPGDRVL (164 aa). A divalent metal cation-binding residues include aspartate 237 and histidine 239. 4-CDP-2-C-methyl-D-erythritol 2-phosphate contacts are provided by residues 237-239 and 263-264; these read DVH and HS. Histidine 271 is an a divalent metal cation binding site. Residues 285–287, 290–294, 361–364, and phenylalanine 368 each bind 4-CDP-2-C-methyl-D-erythritol 2-phosphate; these read DIG, FPDDD, and TTTE.

In the N-terminal section; belongs to the IspD/TarI cytidylyltransferase family. IspD subfamily. The protein in the C-terminal section; belongs to the IspF family. A divalent metal cation serves as cofactor.

The enzyme catalyses 2-C-methyl-D-erythritol 4-phosphate + CTP + H(+) = 4-CDP-2-C-methyl-D-erythritol + diphosphate. It carries out the reaction 4-CDP-2-C-methyl-D-erythritol 2-phosphate = 2-C-methyl-D-erythritol 2,4-cyclic diphosphate + CMP. It functions in the pathway isoprenoid biosynthesis; isopentenyl diphosphate biosynthesis via DXP pathway; isopentenyl diphosphate from 1-deoxy-D-xylulose 5-phosphate: step 2/6. It participates in isoprenoid biosynthesis; isopentenyl diphosphate biosynthesis via DXP pathway; isopentenyl diphosphate from 1-deoxy-D-xylulose 5-phosphate: step 4/6. Functionally, bifunctional enzyme that catalyzes the formation of 4-diphosphocytidyl-2-C-methyl-D-erythritol from CTP and 2-C-methyl-D-erythritol 4-phosphate (MEP) (IspD), and catalyzes the conversion of 4-diphosphocytidyl-2-C-methyl-D-erythritol 2-phosphate (CDP-ME2P) to 2-C-methyl-D-erythritol 2,4-cyclodiphosphate (ME-CPP) with a corresponding release of cytidine 5-monophosphate (CMP) (IspF). This chain is Bifunctional enzyme IspD/IspF, found in Desulforudis audaxviator (strain MP104C).